Reading from the N-terminus, the 1188-residue chain is AT-rich interactive domain-containing protein 5B (1188 aa).

Residue Lys130 forms a Glycyl lysine isopeptide (Lys-Gly) (interchain with G-Cter in SUMO2) linkage. The tract at residues 251 to 277 is disordered; that stretch reads RPRKKKPCPQRRDSFSGVKDSNNNSDG. Ser264 is modified (phosphoserine). The 93-residue stretch at 318 to 410 folds into the ARID domain; it reads RADEQAFLVA…LILPYERFIK (93 aa). Lys336 bears the N6,N6-dimethyllysine mark. A disordered region spans residues 412–611; that stretch reads EEDKPLPPIK…QPPLANQNET (200 aa). Lys445 participates in a covalent cross-link: Glycyl lysine isopeptide (Lys-Gly) (interchain with G-Cter in SUMO2). The span at 446–458 shows a compositional bias: basic and acidic residues; that stretch reads HEIPKSKKEKENA. Residues Lys494 and Lys496 each participate in a glycyl lysine isopeptide (Lys-Gly) (interchain with G-Cter in SUMO2) cross-link. Positions 597 to 609 are enriched in polar residues; it reads SFPTTQPPLANQN. Residues Lys767, Lys774, Lys803, and Lys810 each participate in a glycyl lysine isopeptide (Lys-Gly) (interchain with G-Cter in SUMO2) cross-link. Disordered stretches follow at residues 846-874 and 891-918; these read HHLH…PSHR and DKKS…HKPT. Residues 847–866 show a composition bias toward basic and acidic residues; it reads HLHNEQTSKYPSRDMYRESE. Glycyl lysine isopeptide (Lys-Gly) (interchain with G-Cter in SUMO2) cross-links involve residues Lys893, Lys916, Lys920, and Lys935. A disordered region spans residues 956–978; sequence RVSPMTMSGPKKYPESLSRSGKP. Glycyl lysine isopeptide (Lys-Gly) (interchain with G-Cter in SUMO2) cross-links involve residues Lys988, Lys1000, and Lys1013. Residues 1028–1070 are disordered; that stretch reads ARAVSPLDPSKEVSGKEKASEQESEGSKAAHGGHSGGGSEGHK. Ser1032 carries the post-translational modification Phosphoserine. Positions 1036–1055 are enriched in basic and acidic residues; the sequence is PSKEVSGKEKASEQESEGSK. Glycyl lysine isopeptide (Lys-Gly) (interchain with G-Cter in SUMO2) cross-links involve residues Lys1055 and Lys1070. Ser1133 carries the post-translational modification Phosphoserine.

The protein belongs to the ARID5B family. In terms of processing, methylation at Lys-336 prevents DNA-binding. Demethylation by PHF2 promotes recruitment of the PHF2-ARID5B complex to promoters. Widely expressed, including in liver (at protein level).

Its subcellular location is the nucleus. Its function is as follows. Transcription coactivator that binds to the 5'-AATA[CT]-3' core sequence and plays a key role in adipogenesis and liver development. Acts by forming a complex with phosphorylated PHF2, which mediates demethylation at Lys-336, leading to target the PHF2-ARID5B complex to target promoters, where PHF2 mediates demethylation of dimethylated 'Lys-9' of histone H3 (H3K9me2), followed by transcription activation of target genes. The PHF2-ARID5B complex acts as a coactivator of HNF4A in liver. Required for adipogenesis: regulates triglyceride metabolism in adipocytes by regulating expression of adipogenic genes. Overexpression leads to induction of smooth muscle marker genes, suggesting that it may also act as a regulator of smooth muscle cell differentiation and proliferation. Represses the cytomegalovirus enhancer. The protein is AT-rich interactive domain-containing protein 5B (ARID5B) of Homo sapiens (Human).